A 274-amino-acid chain; its full sequence is Hydroxyethylthiazole kinase (274 aa).

Met-50 is a substrate binding site. Arg-126 and Ser-171 together coordinate ATP. Residue Ala-200 coordinates substrate.

This sequence belongs to the Thz kinase family. It depends on Mg(2+) as a cofactor.

It catalyses the reaction 5-(2-hydroxyethyl)-4-methylthiazole + ATP = 4-methyl-5-(2-phosphooxyethyl)-thiazole + ADP + H(+). The protein operates within cofactor biosynthesis; thiamine diphosphate biosynthesis; 4-methyl-5-(2-phosphoethyl)-thiazole from 5-(2-hydroxyethyl)-4-methylthiazole: step 1/1. Catalyzes the phosphorylation of the hydroxyl group of 4-methyl-5-beta-hydroxyethylthiazole (THZ). The chain is Hydroxyethylthiazole kinase from Acinetobacter baylyi (strain ATCC 33305 / BD413 / ADP1).